The sequence spans 1088 residues: RNA-directed RNA polymerase (1088 aa).

Positions 501–687 constitute a RdRp catalytic domain; sequence LSYGDVTRFL…AKRYIAGGKI (187 aa).

This sequence belongs to the reoviridae RNA-directed RNA polymerase family. As to quaternary structure, interacts with VP3 (Potential). Interacts with VP2; this interaction activates VP1. Interacts with NSP5; this interaction is probably necessary for the formation of functional virus factories. Interacts with NSP2; this interaction is weak. Mg(2+) is required as a cofactor.

It localises to the virion. The catalysed reaction is RNA(n) + a ribonucleoside 5'-triphosphate = RNA(n+1) + diphosphate. Its function is as follows. RNA-directed RNA polymerase that is involved in both transcription and genome replication. Together with VP3 capping enzyme, forms an enzyme complex positioned near the channels situated at each of the five-fold vertices of the core. Following infection, the outermost layer of the virus is lost, leaving a double-layered particle (DLP) made up of the core and VP6 shell. VP1 then catalyzes the transcription of fully conservative plus-strand genomic RNAs that are extruded through the DLP's channels into the cytoplasm where they function as mRNAs for translation of viral proteins. One copy of each of the viral (+)RNAs is also recruited during core assembly, together with newly synthesized polymerase complexes and VP2. The polymerase of these novo-formed particles catalyzes the synthesis of complementary minus-strands leading to dsRNA formation. To do so, the polymerase specifically recognizes and binds 4 bases 5'-UGUG-3' in the conserved 3'-sequence of plus-strand RNA templates. VP2 presumably activates the autoinhibited VP1-RNA complex to coordinate packaging and genome replication. Once dsRNA synthesis is complete, the polymerase switches to the transcriptional mode, thus providing secondary transcription. The chain is RNA-directed RNA polymerase from Rotavirus A (strain RVA/Cow/United States/NCDV-Lincoln/1969/G6P6[1]) (RV-A).